Here is a 442-residue protein sequence, read N- to C-terminus: 5-methylthioadenosine/S-adenosylhomocysteine deaminase (442 aa).

Positions 70 and 72 each coordinate Zn(2+). The substrate site is built by E99 and H191. H218 is a Zn(2+) binding site. Positions 221 and 306 each coordinate substrate. D306 provides a ligand contact to Zn(2+).

Belongs to the metallo-dependent hydrolases superfamily. MTA/SAH deaminase family. Requires Zn(2+) as cofactor.

It carries out the reaction S-adenosyl-L-homocysteine + H2O + H(+) = S-inosyl-L-homocysteine + NH4(+). It catalyses the reaction S-methyl-5'-thioadenosine + H2O + H(+) = S-methyl-5'-thioinosine + NH4(+). Functionally, catalyzes the deamination of 5-methylthioadenosine and S-adenosyl-L-homocysteine into 5-methylthioinosine and S-inosyl-L-homocysteine, respectively. Is also able to deaminate adenosine. The polypeptide is 5-methylthioadenosine/S-adenosylhomocysteine deaminase (Nitratidesulfovibrio vulgaris (strain ATCC 29579 / DSM 644 / CCUG 34227 / NCIMB 8303 / VKM B-1760 / Hildenborough) (Desulfovibrio vulgaris)).